The sequence spans 347 residues: 5-deoxyribose 1-phosphate isomerase (347 aa).

Residues 48-50 (RGA), Arg-91, and Gln-198 contribute to the substrate site. Asp-239 acts as the Proton donor in catalysis. Position 249 to 250 (249 to 250 (NK)) interacts with substrate.

The protein belongs to the EIF-2B alpha/beta/delta subunits family. DrdI subfamily.

It carries out the reaction 5-deoxy-alpha-D-ribose 1-phosphate = 5-deoxy-D-ribulose 1-phosphate. It functions in the pathway carbohydrate degradation. Catalyzes the isomerization of 5-deoxy-alpha-D-ribose 1-phosphate to 5-deoxy-D-ribulose 1-phosphate, as part of a 5-deoxyribose salvage pathway that recycles this toxic radical SAM enzyme by-product to mainstream metabolites. The protein is 5-deoxyribose 1-phosphate isomerase of Bacillus thuringiensis (strain Al Hakam).